Here is a 200-residue protein sequence, read N- to C-terminus: Holliday junction resolvase RecU (200 aa).

The tract at residues 1 to 24 (MTIRYPNGKRYDQASQPHKTPIKK) is disordered. Positions 85, 87, 100, and 119 each coordinate Mg(2+).

This sequence belongs to the RecU family. The cofactor is Mg(2+).

It is found in the cytoplasm. It catalyses the reaction Endonucleolytic cleavage at a junction such as a reciprocal single-stranded crossover between two homologous DNA duplexes (Holliday junction).. Endonuclease that resolves Holliday junction intermediates in genetic recombination. Cleaves mobile four-strand junctions by introducing symmetrical nicks in paired strands. Promotes annealing of linear ssDNA with homologous dsDNA. Required for DNA repair, homologous recombination and chromosome segregation. This Bacillus mycoides (strain KBAB4) (Bacillus weihenstephanensis) protein is Holliday junction resolvase RecU.